A 249-amino-acid chain; its full sequence is Small ribosomal subunit protein eS6 (249 aa).

Residue K14 forms a Glycyl lysine isopeptide (Lys-Gly) (interchain with G-Cter in SUMO2) linkage. E35 is modified (ADP-ribosyl glutamic acid). At R137 the chain carries (3R)-3-hydroxyarginine. The residue at position 148 (S148) is a Phosphoserine. An N6-acetyllysine modification is found at K211. Residues 217-229 (MKEAKEKRQEQIA) show a composition bias toward basic and acidic residues. Positions 217–249 (MKEAKEKRQEQIAKRRRLSSLRASTSKSESSQK) are disordered. Phosphoserine is present on residues S235, S236, S240, S242, S244, and S247. Residues 236–249 (SLRASTSKSESSQK) are compositionally biased toward low complexity.

Belongs to the eukaryotic ribosomal protein eS6 family. As to quaternary structure, component of the small ribosomal subunit. Part of the small subunit (SSU) processome, composed of more than 70 proteins and the RNA chaperone small nucleolar RNA (snoRNA) U3. Post-translationally, ribosomal protein S6 is the major substrate of protein kinases in eukaryote ribosomes. The phosphorylation is stimulated by growth factors, tumor promoting agents, and mitogens. It is dephosphorylated at growth arrest. Phosphorylated at Ser-235 and Ser-236 by RPS6KA1 and RPS6KA3; phosphorylation at these sites facilitates the assembly of the pre-initiation complex. Specifically hydroxylated (with R stereochemistry) at C-3 of Arg-137 by KDM8. In terms of processing, mono-ADP-ribosylation at Glu-35 by PARP16 inhibits polysome assembly and mRNA loading, thereby inhibiting protein translation.

The protein localises to the cytoplasm. Its subcellular location is the nucleus. It is found in the nucleolus. Component of the 40S small ribosomal subunit. Plays an important role in controlling cell growth and proliferation through the selective translation of particular classes of mRNA. Part of the small subunit (SSU) processome, first precursor of the small eukaryotic ribosomal subunit. During the assembly of the SSU processome in the nucleolus, many ribosome biogenesis factors, an RNA chaperone and ribosomal proteins associate with the nascent pre-rRNA and work in concert to generate RNA folding, modifications, rearrangements and cleavage as well as targeted degradation of pre-ribosomal RNA by the RNA exosome. This is Small ribosomal subunit protein eS6 (RPS6) from Oryctolagus cuniculus (Rabbit).